Consider the following 412-residue polypeptide: Serine hydroxymethyltransferase (412 aa).

(6S)-5,6,7,8-tetrahydrofolate-binding positions include Leu117 and 121–123 (GHL). At Lys226 the chain carries N6-(pyridoxal phosphate)lysine.

The protein belongs to the SHMT family. Homodimer. Requires pyridoxal 5'-phosphate as cofactor.

It is found in the cytoplasm. The catalysed reaction is (6R)-5,10-methylene-5,6,7,8-tetrahydrofolate + glycine + H2O = (6S)-5,6,7,8-tetrahydrofolate + L-serine. It functions in the pathway one-carbon metabolism; tetrahydrofolate interconversion. Its pathway is amino-acid biosynthesis; glycine biosynthesis; glycine from L-serine: step 1/1. Catalyzes the reversible interconversion of serine and glycine with tetrahydrofolate (THF) serving as the one-carbon carrier. This reaction serves as the major source of one-carbon groups required for the biosynthesis of purines, thymidylate, methionine, and other important biomolecules. Also exhibits THF-independent aldolase activity toward beta-hydroxyamino acids, producing glycine and aldehydes, via a retro-aldol mechanism. The protein is Serine hydroxymethyltransferase of Staphylococcus haemolyticus (strain JCSC1435).